We begin with the raw amino-acid sequence, 1194 residues long: Protein argonaute 3 (1194 aa).

Residues 1–98 are compositionally biased toward basic and acidic residues; sequence MDRGGYRGGR…GRGGGGDRGR (98 aa). 2 disordered regions span residues 1 to 277 and 299 to 341; these read MDRG…VSQS and TVLP…DKGG. Residues 142–158 show a composition bias toward low complexity; it reads PPSSSQAQVSQGVAPGD. The span at 167–180 shows a compositional bias: basic and acidic residues; it reads VGRDGVGDVGRDGV. Residues 181-214 show a composition bias toward gly residues; it reads GDVGQGGVGDVGQVGVGDVGQGGVGDVGQGGVGD. Basic and acidic residues predominate over residues 215–228; it reads VGRDGVGDVGRDGV. Residues 229–238 show a composition bias toward gly residues; the sequence is GDVGRGGVGD. Low complexity-rich tracts occupy residues 256–277 and 299–316; these read QLQQ…VSQS and TVLP…HTAS. Over residues 317–326 the composition is skewed to polar residues; sequence GSQVMTPKPS. Positions 327–341 are enriched in basic and acidic residues; that stretch reads SSDKKEPVKRPDKGG. Residues 540–656 form the PAZ domain; the sequence is SVIEYLKLYF…VPMEFCNLVE (117 aa). Residues 841–1145 form the Piwi domain; that stretch reads LVLCAMTGKH…AASRGRVYYE (305 aa).

This sequence belongs to the argonaute family. Ago subfamily.

Involved in RNA-mediated post-transcriptional gene silencing (PTGS). Main component of the RNA-induced silencing complex (RISC) that binds to a short guide RNA such as a microRNA (miRNA) or small interfering RNA (siRNA). RISC uses the mature miRNA or siRNA as a guide for slicer-directed cleavage of homologous mRNAs to repress gene expression. The polypeptide is Protein argonaute 3 (AGO3) (Arabidopsis thaliana (Mouse-ear cress)).